A 288-amino-acid chain; its full sequence is ATP synthase gamma chain (288 aa).

This sequence belongs to the ATPase gamma chain family. In terms of assembly, F-type ATPases have 2 components, CF(1) - the catalytic core - and CF(0) - the membrane proton channel. CF(1) has five subunits: alpha(3), beta(3), gamma(1), delta(1), epsilon(1). CF(0) has three main subunits: a, b and c.

It is found in the cell inner membrane. Produces ATP from ADP in the presence of a proton gradient across the membrane. The gamma chain is believed to be important in regulating ATPase activity and the flow of protons through the CF(0) complex. The sequence is that of ATP synthase gamma chain from Actinobacillus pleuropneumoniae serotype 5b (strain L20).